Consider the following 175-residue polypeptide: Nucleoside triphosphate/diphosphate phosphatase (175 aa).

Arginine 23 functions as the Proton donor in the catalytic mechanism. The Mg(2+) site is built by asparagine 87, aspartate 103, aspartate 105, aspartate 107, aspartate 120, and glutamate 123.

This sequence belongs to the Ntdp family. Requires Mg(2+) as cofactor.

The catalysed reaction is a ribonucleoside 5'-triphosphate + H2O = a ribonucleoside 5'-diphosphate + phosphate + H(+). It catalyses the reaction a ribonucleoside 5'-diphosphate + H2O = a ribonucleoside 5'-phosphate + phosphate + H(+). Functionally, has nucleoside phosphatase activity towards nucleoside triphosphates and nucleoside diphosphates. This is Nucleoside triphosphate/diphosphate phosphatase from Halalkalibacterium halodurans (strain ATCC BAA-125 / DSM 18197 / FERM 7344 / JCM 9153 / C-125) (Bacillus halodurans).